The primary structure comprises 462 residues: DEK domain-containing chromatin-associated protein 1 (462 aa).

Disordered stretches follow at residues 18 to 91 (AVTE…TQGR) and 212 to 390 (KETK…RKEL). Residues 20 to 32 (TEKDTETKKKDEV) show a composition bias toward basic and acidic residues. Over residues 33–46 (EKDEAMEEKGEEID) the composition is skewed to acidic residues. Positions 77–91 (PRSSGNKPLSITQGR) are enriched in polar residues. Acidic residues predominate over residues 267–276 (NGEDDVAPEE). 3 stretches are compositionally biased toward basic and acidic residues: residues 277–303 (ENNKSEDTETEDEKDKAKEKTKSTDKK), 312–322 (EKPAAEEEKSI), and 347–360 (QKVDKDDSSKEKGK). Residues 344–351 (SKKQKVDK) carry the Nuclear localization signal motif. The 56-residue stretch at 384 to 439 (EPTRKELHVVVTKILKEVDFNTATLSDILRKLGSHFGIDLMHRKAEVKDIITDAIN) folds into the DEK-C domain. 2 consecutive DNA-binding regions follow at residues 402–416 (DFNTATLSDILRKLG) and 431–435 (KDIIT). A disordered region spans residues 438–462 (INEMSDDDDEKEEDTEDEGEKEGKD). Over residues 441-462 (MSDDDDEKEEDTEDEGEKEGKD) the composition is skewed to acidic residues.

In terms of assembly, found in a mRNA splicing-dependent exon junction complex (EJC). Binds specifically histones H3 and H4.

The protein resides in the nucleus. It localises to the nucleolus. Functionally, chromatin-associated protein which contributes to the modulation of chromatin structure (such as super-helical structure of DNA) and function. Binds to chromatin of protein-coding genes throughout the genome to regulate nucleosome occupancy and chromatin accessibility, and to modulate the expression of target genes. The protein is DEK domain-containing chromatin-associated protein 1 of Arabidopsis thaliana (Mouse-ear cress).